The sequence spans 178 residues: ATP synthase subunit delta (178 aa).

This sequence belongs to the ATPase delta chain family. F-type ATPases have 2 components, F(1) - the catalytic core - and F(0) - the membrane proton channel. F(1) has five subunits: alpha(3), beta(3), gamma(1), delta(1), epsilon(1). F(0) has three main subunits: a(1), b(2) and c(10-14). The alpha and beta chains form an alternating ring which encloses part of the gamma chain. F(1) is attached to F(0) by a central stalk formed by the gamma and epsilon chains, while a peripheral stalk is formed by the delta and b chains.

It is found in the cell membrane. Its function is as follows. F(1)F(0) ATP synthase produces ATP from ADP in the presence of a proton or sodium gradient. F-type ATPases consist of two structural domains, F(1) containing the extramembraneous catalytic core and F(0) containing the membrane proton channel, linked together by a central stalk and a peripheral stalk. During catalysis, ATP synthesis in the catalytic domain of F(1) is coupled via a rotary mechanism of the central stalk subunits to proton translocation. This protein is part of the stalk that links CF(0) to CF(1). It either transmits conformational changes from CF(0) to CF(1) or is implicated in proton conduction. This is ATP synthase subunit delta from Streptococcus gordonii (strain Challis / ATCC 35105 / BCRC 15272 / CH1 / DL1 / V288).